The following is a 348-amino-acid chain: MAIIQLSNIKKQYENGILVIDDLNLTVADSELLVLVGPSGCGKSTLLRIIAGLEQVTSGELYIDDERINDREPADRDIAMVFQNYALYPHMTVRGNLEYGLKNRKTPKDEINRRITHAAKLLEIESFLDRKPRQLSGGQRQRVAMGRVIVRQPRVFLFDEPLSNLDAKLRAQMCIEIKTLQRSLGTTSLYVTHDQLEAMTLADRIAVINKGAIEQIGTPIEIYDTPETTFVADFIGSPPMNFLDRKILEQHLGYSFSYNKETDLLAFRPEVILLGEYPDKGPVFHTQIELIKPIGTGCHVLTRWNETIFTIEIKERLTNDYGKKLSFTVPHQNFHTFNKTTGKRKSNK.

The ABC transporter domain occupies 4–235 (IQLSNIKKQY…PETTFVADFI (232 aa)). An ATP-binding site is contributed by 37 to 44 (GPSGCGKS).

Belongs to the ABC transporter superfamily. sn-glycerol-3-phosphate importer (TC 3.A.1.1.3) family. The complex is composed of two ATP-binding proteins (UgpC), two transmembrane proteins (UgpA and UgpE) and a solute-binding protein (UgpB).

It is found in the cell inner membrane. It carries out the reaction sn-glycerol 3-phosphate(out) + ATP + H2O = sn-glycerol 3-phosphate(in) + ADP + phosphate + H(+). In terms of biological role, part of the ABC transporter complex UgpBAEC involved in sn-glycerol-3-phosphate (G3P) import. Responsible for energy coupling to the transport system. This Bartonella quintana (strain Toulouse) (Rochalimaea quintana) protein is sn-glycerol-3-phosphate import ATP-binding protein UgpC.